Reading from the N-terminus, the 963-residue chain is Trehalose synthase (963 aa).

D60 lines the substrate pocket. Position 100 (N100) interacts with Ca(2+). Substrate is bound by residues H101 and Q165. D167 contacts Ca(2+). R195 lines the substrate pocket. The Nucleophile role is filled by D197. Ca(2+) is bound by residues Y201, L202, and E204. E240 acts as the Proton donor in catalysis. Residues H305 and D306 each coordinate substrate.

Belongs to the glycosyl hydrolase 13 family. TreS subfamily.

The enzyme catalyses D-maltose = alpha,alpha-trehalose. Functionally, catalyzes the reversible interconversion of maltose and alpha,alpha-trehalose by transglucosylation. The chain is Trehalose synthase (treS) from Thermus thermophilus.